A 48-amino-acid chain; its full sequence is ATP synthase protein 8 (48 aa).

The residue at position 1 (M1) is an N-formylmethionine. The Mitochondrial intermembrane segment spans residues 1–12 (MPQLVPFYFTNQ). Residues 13 to 32 (IFYGFASLSVIVYLFSIYIL) form a helical membrane-spanning segment. The Mitochondrial matrix portion of the chain corresponds to 33-48 (PHYLEIYVTRIFITKT).

F-type ATP synthases have 2 components, the catalytic core F(1) and the membrane-embedded component F(0), linked together by a central stalk and a peripheral stalk. The central stalk, also called rotor shaft, is often seen as part of F(1). The peripheral stalk is seen as part of F(0). F(0) contains the membrane channel next to the rotor. F-type ATP synthases form dimers but each monomer functions independently in ATP generation. The dimer consists of 17 different polypeptides: ATP1 (subunit alpha, 3 molecules per monomer, part of F(1)), ATP2 (subunit beta, 3 copies per monomer, part of F(1)), ATP3 (subunit gamma, part of the central stalk), ATP4 (subunit b, part of the peripheral stalk), ATP5/OSCP (subunit 5/OSCP, part of the peripheral stalk), ATP6 (subunit a, part of the peripheral stalk), ATP7 (subunit d, part of the peripheral stalk), ATP8 (subunit 8, part of the peripheral stalk), OLI1 (subunit c, part of the rotor, 10 molecules per monomer), ATP14 (subunit h, part of the peripheral stalk), ATP15 (subunit epsilon, part of the central stalk), ATP16 (subunit delta, part of the central stalk), ATP17 (subunit f, part of the peripheral stalk), ATP18 (subunit i/j, part of the peripheral stalk), ATP19 (subunit k, dimer-specific, at interface between monomers), ATP20 (subunit g, at interface between monomers), TIM11 (subunit e, at interface between monomers).

Its subcellular location is the mitochondrion inner membrane. In terms of biological role, mitochondrial membrane ATP synthase (F(1)F(0) ATP synthase or Complex V) produces ATP from ADP in the presence of a proton gradient across the membrane which is generated by electron transport complexes of the respiratory chain. F-type ATP synthases consist of two structural domains, F(1) - containing the extramembraneous catalytic core, and F(0) - containing the membrane proton channel, linked together by a central stalk and a peripheral stalk. During catalysis, ATP synthesis in the catalytic domain of F(1) is coupled via a rotary mechanism of the central stalk subunits to proton translocation. Part of the complex F(0) domain. Minor subunit located with subunit a/ATP6 in the membrane. This Yarrowia lipolytica (strain CLIB 122 / E 150) (Yeast) protein is ATP synthase protein 8.